The chain runs to 122 residues: Large ribosomal subunit protein uL14 (122 aa).

The protein belongs to the universal ribosomal protein uL14 family. In terms of assembly, part of the 50S ribosomal subunit. Forms a cluster with proteins L3 and L19. In the 70S ribosome, L14 and L19 interact and together make contacts with the 16S rRNA in bridges B5 and B8.

In terms of biological role, binds to 23S rRNA. Forms part of two intersubunit bridges in the 70S ribosome. The chain is Large ribosomal subunit protein uL14 from Rhizobium meliloti (strain 1021) (Ensifer meliloti).